The following is a 362-amino-acid chain: DNA replication and repair protein RecF (362 aa).

Gly31 to Thr38 contributes to the ATP binding site.

This sequence belongs to the RecF family.

The protein localises to the cytoplasm. In terms of biological role, the RecF protein is involved in DNA metabolism; it is required for DNA replication and normal SOS inducibility. RecF binds preferentially to single-stranded, linear DNA. It also seems to bind ATP. The sequence is that of DNA replication and repair protein RecF from Hydrogenovibrio crunogenus (strain DSM 25203 / XCL-2) (Thiomicrospira crunogena).